The sequence spans 618 residues: Cell pattern formation-associated protein STU1 (618 aa).

Polar residues predominate over residues 13-28; it reads MSAGPTQQPPTVTSYN. The tract at residues 13 to 105 is disordered; that stretch reads MSAGPTQQPP…FDTSGQIAPP (93 aa). Residues 48–59 are compositionally biased toward low complexity; the sequence is YGGYPYTNGMPS. A compositionally biased stretch (polar residues) spans 91–101; that stretch reads NQYSGFDTSGQ. Residues 110-216 form the HTH APSES-type domain; sequence RVTATLWEDE…HNISALLYHP (107 aa). A DNA-binding region (H-T-H motif) is located at residues 144–165; it reads GTKLLNVAGMTRGRRDGILKSE. Disordered regions lie at residues 229 to 355 and 390 to 618; these read AERR…YDGS and SEMG…SRRR. 4 stretches are compositionally biased toward polar residues: residues 256-266, 284-298, 305-326, and 336-355; these read MSQNGSQSLSG, TSASSAVNMGSSDSF, AMSNGQQNPMSIDTSLSNTRSM, and GSTLQSMQAYPPASQSYDGS. The segment covering 438-451 has biased composition (basic and acidic residues); sequence DHEHDPEYTHDSRT. A compositionally biased stretch (polar residues) spans 452-476; the sequence is YDNSQSQYNYTAPPVSSISSEQAHV. Over residues 494-512 the composition is skewed to low complexity; that stretch reads PRSAAAPQAYYQQAYSTSP. Over residues 513–563 the composition is skewed to polar residues; it reads RSATHQSTSNLYNVMSNDRGSTTNGSANGDVYSQSTDLSNGYATPVTNGNA. The nuclear localization domain stretch occupies residues 566–588; that stretch reads KRGRDDDDDRSSSSGQMDLKRRK.

Belongs to the EFG1/PHD1/stuA family.

Its subcellular location is the nucleus. Transcription factor that regulates asexual reproduction. Binds the StuA-response elements (StRE) with the consensus sequence 5'-(A/T)CGCG(T/A)N(A/C)-3' at the promoters of target genes. Required for appressorium-mediated infection of rice leaves due to its involvement in the mobilization of lipids and glycogen. This is Cell pattern formation-associated protein STU1 from Pyricularia oryzae (strain 70-15 / ATCC MYA-4617 / FGSC 8958) (Rice blast fungus).